The sequence spans 735 residues: Protein RETICULATA-RELATED 5, chloroplastic (735 aa).

The N-terminal 75 residues, 1 to 75 (MKPTTNGGLL…TRRAILVAPP (75 aa)), are a transit peptide targeting the chloroplast. 2 consecutive transmembrane segments (helical) span residues 519 to 539 (ASVV…FISY) and 582 to 602 (VIIG…AAVG). Residues 714–726 (ASQSTVEYSTTEE) are compositionally biased toward polar residues. Residues 714 to 735 (ASQSTVEYSTTEEASMDDLKNQ) form a disordered region.

The protein belongs to the RETICULATA family.

The protein resides in the plastid. Its subcellular location is the chloroplast membrane. Its function is as follows. May play a role in leaf development. The protein is Protein RETICULATA-RELATED 5, chloroplastic of Arabidopsis thaliana (Mouse-ear cress).